A 177-amino-acid polypeptide reads, in one-letter code: Disulfide bond formation protein B (177 aa).

Over 1-14 the chain is Cytoplasmic; it reads MLALLKQFSEKRFV. A helical transmembrane segment spans residues 15–31; it reads WFLLAFSSLALESTALY. Topologically, residues 32–49 are periplasmic; the sequence is FQYGMGLQPCVLCVYERL. C41 and C44 are oxidised to a cystine. The chain crosses the membrane as a helical span at residues 50–65; that stretch reads AMIGLFVAGIIALLQP. At 66–72 the chain is on the cytoplasmic side; that stretch reads LAFILRL. A helical membrane pass occupies residues 73–90; sequence IALALGLFSSIKGLLISF. Residues 91-145 are Periplasmic-facing; the sequence is RHLDLQMNPAPWKQCEFIPNFPETLPFHQWFPFIFNPTGSCNESQWSLFGLTMVQ. C105 and C131 form a disulfide bridge. A helical membrane pass occupies residues 146–164; it reads WLVVIFSLYVVILTLLLIA. The Cytoplasmic portion of the chain corresponds to 165–177; sequence QVIKTRKQRRLFN.

The protein belongs to the DsbB family.

The protein localises to the cell inner membrane. Required for disulfide bond formation in some periplasmic proteins. Acts by oxidizing the DsbA protein. In Haemophilus influenzae (strain 86-028NP), this protein is Disulfide bond formation protein B.